A 452-amino-acid chain; its full sequence is MSLSKLTQTCFSRHQAKTFIRLYSSDFKSLLGPPAVANPYADNGRTRFAPIVPINHGNVFASIKLPINETQEAIAFKSEVEEAPKVEKLEVESPKIEAEKVLSSPPPAPAPTSSAIDELNSLKDSLEKLESAASKSSSSSGGSSDNSDPGNAEEIEARRKRMERNTRIGAYVLFGGSIIGFISFCFYYGRAQRDEFGNVISDEFSGSFLAPFYRIANSFKLWRDYVVEPAREQLLPDPLPAPYLQPKYTIVIELKNILVHPEWTYKTGYRFLKRPALDYFLDVIGYPNFEVVIYSSESMMTAAPVVDSFDPKQRIMYKLFRDCTKYMNGHHVKDLSKLNRDLSKVIYIDFDAKSGQLNPENMLRVPEWKGNMDDTSLVDLAELLKTIHLSDAEDVRPMLQYYSQYDDPAKEFRRRAVYLSQQEEQKKQQPDDSSMLKRYSGRLFGSRRHVNA.

A mitochondrion-targeting transit peptide spans 1–23 (MSLSKLTQTCFSRHQAKTFIRLY). At 24–167 (SSDFKSLLGP…RRKRMERNTR (144 aa)) the chain is on the mitochondrial matrix side. 2 disordered regions span residues 96 to 115 (IEAE…TSSA) and 130 to 153 (ESAA…GNAE). Residues 131-144 (SAASKSSSSSGGSS) are compositionally biased toward low complexity. Residues 168–188 (IGAYVLFGGSIIGFISFCFYY) form a helical membrane-spanning segment. At 189-452 (GRAQRDEFGN…LFGSRRHVNA (264 aa)) the chain is on the mitochondrial intermembrane side. The region spanning 243-387 (YLQPKYTIVI…VDLAELLKTI (145 aa)) is the FCP1 homology domain.

This sequence belongs to the TIM50 family.

The protein resides in the mitochondrion inner membrane. Essential component of the TIM23 complex, a complex that mediates the translocation of transit peptide-containing proteins across the mitochondrial inner membrane. The chain is Mitochondrial import inner membrane translocase subunit TIM50 (scpl-4) from Caenorhabditis elegans.